A 344-amino-acid chain; its full sequence is tRNA N6-adenosine threonylcarbamoyltransferase (344 aa).

2 residues coordinate Fe cation: His-119 and His-123. Residues Val-141–Gly-145, Asp-174, Gly-187, Asp-191, and Asn-280 contribute to the substrate site. Asp-310 contributes to the Fe cation binding site.

This sequence belongs to the KAE1 / TsaD family. Fe(2+) serves as cofactor.

It is found in the cytoplasm. The enzyme catalyses L-threonylcarbamoyladenylate + adenosine(37) in tRNA = N(6)-L-threonylcarbamoyladenosine(37) in tRNA + AMP + H(+). Required for the formation of a threonylcarbamoyl group on adenosine at position 37 (t(6)A37) in tRNAs that read codons beginning with adenine. Is involved in the transfer of the threonylcarbamoyl moiety of threonylcarbamoyl-AMP (TC-AMP) to the N6 group of A37, together with TsaE and TsaB. TsaD likely plays a direct catalytic role in this reaction. The chain is tRNA N6-adenosine threonylcarbamoyltransferase from Listeria welshimeri serovar 6b (strain ATCC 35897 / DSM 20650 / CCUG 15529 / CIP 8149 / NCTC 11857 / SLCC 5334 / V8).